The following is a 189-amino-acid chain: Pyridoxal 5'-phosphate synthase subunit PdxT (189 aa).

46-48 (GES) contacts L-glutamine. Residue Cys78 is the Nucleophile of the active site. L-glutamine contacts are provided by residues Arg107 and 136-137 (IR). Residues His173 and Glu175 each act as charge relay system in the active site.

This sequence belongs to the glutaminase PdxT/SNO family. In the presence of PdxS, forms a dodecamer of heterodimers. Only shows activity in the heterodimer.

It carries out the reaction aldehydo-D-ribose 5-phosphate + D-glyceraldehyde 3-phosphate + L-glutamine = pyridoxal 5'-phosphate + L-glutamate + phosphate + 3 H2O + H(+). The enzyme catalyses L-glutamine + H2O = L-glutamate + NH4(+). It participates in cofactor biosynthesis; pyridoxal 5'-phosphate biosynthesis. In terms of biological role, catalyzes the hydrolysis of glutamine to glutamate and ammonia as part of the biosynthesis of pyridoxal 5'-phosphate. The resulting ammonia molecule is channeled to the active site of PdxS. This is Pyridoxal 5'-phosphate synthase subunit PdxT from Roseiflexus castenholzii (strain DSM 13941 / HLO8).